A 158-amino-acid chain; its full sequence is Ribosomal RNA large subunit methyltransferase H (158 aa).

S-adenosyl-L-methionine-binding positions include Leu-74, Gly-105, and 124–129 (LGPLTL).

This sequence belongs to the RNA methyltransferase RlmH family. In terms of assembly, homodimer.

It localises to the cytoplasm. It catalyses the reaction pseudouridine(1915) in 23S rRNA + S-adenosyl-L-methionine = N(3)-methylpseudouridine(1915) in 23S rRNA + S-adenosyl-L-homocysteine + H(+). Specifically methylates the pseudouridine at position 1915 (m3Psi1915) in 23S rRNA. This Xylella fastidiosa (strain 9a5c) protein is Ribosomal RNA large subunit methyltransferase H.